A 205-amino-acid polypeptide reads, in one-letter code: Large ribosomal subunit protein uL3 (205 aa).

Belongs to the universal ribosomal protein uL3 family. Part of the 50S ribosomal subunit. Forms a cluster with proteins L14 and L19.

In terms of biological role, one of the primary rRNA binding proteins, it binds directly near the 3'-end of the 23S rRNA, where it nucleates assembly of the 50S subunit. In Bacteroides fragilis (strain ATCC 25285 / DSM 2151 / CCUG 4856 / JCM 11019 / LMG 10263 / NCTC 9343 / Onslow / VPI 2553 / EN-2), this protein is Large ribosomal subunit protein uL3.